A 90-amino-acid chain; its full sequence is Large ribosomal subunit protein uL16c (90 aa).

It belongs to the universal ribosomal protein uL16 family. Part of the 50S ribosomal subunit.

Its subcellular location is the plastid. The protein localises to the chloroplast. This is Large ribosomal subunit protein uL16c (rpl16) from Oenothera ammophila (Evening primerose).